The following is a 412-amino-acid chain: Tyrosine--tRNA ligase (412 aa).

Position 31 (tyrosine 31) interacts with L-tyrosine. Residues 36–45 (PTAPSLHIGH) carry the 'HIGH' region motif. L-tyrosine contacts are provided by tyrosine 162 and glutamine 166. The 'KMSKS' region signature appears at 222 to 226 (KIGKT). Residue lysine 225 coordinates ATP. One can recognise an S4 RNA-binding domain in the interval 345–411 (KRWLDIVVEL…GKRKKQVIDL (67 aa)).

This sequence belongs to the class-I aminoacyl-tRNA synthetase family. TyrS type 1 subfamily. As to quaternary structure, homodimer.

It localises to the cytoplasm. The catalysed reaction is tRNA(Tyr) + L-tyrosine + ATP = L-tyrosyl-tRNA(Tyr) + AMP + diphosphate + H(+). Functionally, catalyzes the attachment of tyrosine to tRNA(Tyr) in a two-step reaction: tyrosine is first activated by ATP to form Tyr-AMP and then transferred to the acceptor end of tRNA(Tyr). This is Tyrosine--tRNA ligase from Chlamydia trachomatis serovar A (strain ATCC VR-571B / DSM 19440 / HAR-13).